The primary structure comprises 144 residues: Ribosome-binding factor A (144 aa).

Residues lysine 121–glutamate 144 form a disordered region. Positions glutamate 128–glutamate 138 are enriched in acidic residues.

It belongs to the RbfA family. As to quaternary structure, monomer. Binds 30S ribosomal subunits, but not 50S ribosomal subunits or 70S ribosomes.

The protein localises to the cytoplasm. Functionally, one of several proteins that assist in the late maturation steps of the functional core of the 30S ribosomal subunit. Associates with free 30S ribosomal subunits (but not with 30S subunits that are part of 70S ribosomes or polysomes). Required for efficient processing of 16S rRNA. May interact with the 5'-terminal helix region of 16S rRNA. The polypeptide is Ribosome-binding factor A (Synechococcus sp. (strain JA-2-3B'a(2-13)) (Cyanobacteria bacterium Yellowstone B-Prime)).